The primary structure comprises 214 residues: Pyridoxine/pyridoxamine 5'-phosphate oxidase (214 aa).

Residues 9-12 and lysine 67 each bind substrate; that span reads RKNY. FMN is bound by residues 62 to 67, 77 to 78, lysine 84, and glutamine 106; these read RMVLLK and YT. Substrate is bound by residues tyrosine 124, arginine 128, and serine 132. Residues 141–142 and tryptophan 186 contribute to the FMN site; that span reads QS. Position 192-194 (192-194) interacts with substrate; it reads RLH. Position 196 (arginine 196) interacts with FMN.

This sequence belongs to the pyridoxamine 5'-phosphate oxidase family. Homodimer. The cofactor is FMN.

The enzyme catalyses pyridoxamine 5'-phosphate + O2 + H2O = pyridoxal 5'-phosphate + H2O2 + NH4(+). It carries out the reaction pyridoxine 5'-phosphate + O2 = pyridoxal 5'-phosphate + H2O2. It participates in cofactor metabolism; pyridoxal 5'-phosphate salvage; pyridoxal 5'-phosphate from pyridoxamine 5'-phosphate: step 1/1. It functions in the pathway cofactor metabolism; pyridoxal 5'-phosphate salvage; pyridoxal 5'-phosphate from pyridoxine 5'-phosphate: step 1/1. In terms of biological role, catalyzes the oxidation of either pyridoxine 5'-phosphate (PNP) or pyridoxamine 5'-phosphate (PMP) into pyridoxal 5'-phosphate (PLP). The sequence is that of Pyridoxine/pyridoxamine 5'-phosphate oxidase from Gloeothece citriformis (strain PCC 7424) (Cyanothece sp. (strain PCC 7424)).